The primary structure comprises 147 residues: Hemoglobin subunit gamma (147 aa).

Residues 3 to 147 form the Globin domain; the sequence is NFTAEDKAAI…VASALASRYH (145 aa). Residues His-64 and His-93 each coordinate heme b.

It belongs to the globin family. In terms of assembly, heterotetramer of two alpha chains and two gamma chains in fetal hemoglobin (Hb F). Red blood cells.

Functionally, gamma chains make up the fetal hemoglobin F, in combination with alpha chains. This Lagothrix lagotricha (Brown woolly monkey) protein is Hemoglobin subunit gamma (HBG).